The primary structure comprises 276 residues: Hydroxycinnamoyl-CoA hydratase-lyase (276 aa).

Positions 29, 68, 70, and 72 each coordinate acetyl-CoA. Y75 is a vanillin binding site. Residues G120, S142, and W146 each contribute to the acetyl-CoA site. 2 residues coordinate vanillin: G151 and Y239.

Belongs to the enoyl-CoA hydratase/isomerase family. As to quaternary structure, homohexamer; dimer of trimers.

The catalysed reaction is (E)-feruloyl-CoA + H2O = vanillin + acetyl-CoA. It catalyses the reaction (E)-caffeoyl-CoA + H2O = 3,4-dihydroxybenzaldehyde + acetyl-CoA. The enzyme catalyses (E)-4-coumaroyl-CoA + H2O = 4-hydroxybenzaldehyde + acetyl-CoA. It carries out the reaction (E)-feruloyl-CoA + H2O = 3-hydroxy-3-(4-hydroxy-3-methoxyphenyl)propanoyl-CoA. The catalysed reaction is 3-hydroxy-3-(4-hydroxy-3-methoxyphenyl)propanoyl-CoA = vanillin + acetyl-CoA. It catalyses the reaction (E)-caffeoyl-CoA + H2O = 3-hydroxy-3-(3,4-dihydroxyphenyl)propanoyl-CoA. The enzyme catalyses 3-hydroxy-3-(3,4-dihydroxyphenyl)propanoyl-CoA = 3,4-dihydroxybenzaldehyde + acetyl-CoA. It carries out the reaction (E)-4-coumaroyl-CoA + H2O = 3-hydroxy-3-(4-hydroxyphenyl)propanoyl-CoA. The catalysed reaction is 3-hydroxy-3-(4-hydroxyphenyl)propanoyl-CoA = 4-hydroxybenzaldehyde + acetyl-CoA. Its function is as follows. Catalyzes the hydration of the acyl-CoA thioester of ferulic acid and the subsequent retro-aldol cleavage of the hydrated intermediate to yield vanillin (4-hydroxy-3-methoxy-benzaldehyde). The enzyme is also active with caffeoyl-CoA and 4-coumaroyl-CoA producing 3,4-dihydroxybenzaldehyde and 4-hydroxybenzaldehyde, respectively. This chain is Hydroxycinnamoyl-CoA hydratase-lyase, found in Pseudomonas fluorescens.